The chain runs to 398 residues: tRNA-specific 2-thiouridylase MnmA (398 aa).

Residues alanine 20–serine 27 and leucine 46 each bind ATP. The active-site Nucleophile is cysteine 114. The cysteines at positions 114 and 210 are disulfide-linked. Glycine 138 lines the ATP pocket. The interval arginine 160–glutamine 162 is interaction with tRNA. The active-site Cysteine persulfide intermediate is cysteine 210.

It belongs to the MnmA/TRMU family.

The protein resides in the cytoplasm. The catalysed reaction is S-sulfanyl-L-cysteinyl-[protein] + uridine(34) in tRNA + AH2 + ATP = 2-thiouridine(34) in tRNA + L-cysteinyl-[protein] + A + AMP + diphosphate + H(+). Catalyzes the 2-thiolation of uridine at the wobble position (U34) of tRNA, leading to the formation of s(2)U34. This Brucella melitensis biotype 1 (strain ATCC 23456 / CCUG 17765 / NCTC 10094 / 16M) protein is tRNA-specific 2-thiouridylase MnmA.